The primary structure comprises 155 residues: Chromosomal passenger complex protein bir-1 (155 aa).

The BIR repeat unit spans residues 20-87 (RLMTFKNFEY…KRDEPCEFVR (68 aa)). Zn(2+) is bound by residues C57, C60, H76, and C83.

The protein belongs to the IAP family. Component of the CPC complex which consists of icp-1; csc-1; bir-1 and air-2. Within the complex, interacts with csc-1, icp-1 and air-2. Interacts with csc-1 in a zinc-dependent-manner; the interaction is direct. As to expression, expressed in oocytes and sperm.

The protein localises to the chromosome. Its subcellular location is the cytoplasm. It localises to the cytoskeleton. The protein resides in the spindle. It is found in the midbody. Its function is as follows. Component of the chromosomal passenger complex (CPC), a complex that acts as a key regulator of chromosome segregation and cytokinesis. The CPC complex has essential functions at the centromere in ensuring correct chromosome condensation, alignment and segregation. In the complex, required to direct the Aurora B/air-2 kinase to chromosomes. Also functions in spindle midzone formation and in the formation of polar bodies during oogenesis. Required for the localization of the kinetochore component hcp-1 to chromosomes. Involved in the positive regulation of transcription. Involved in the transcriptional regulation of collagen genes. The sequence is that of Chromosomal passenger complex protein bir-1 from Caenorhabditis elegans.